We begin with the raw amino-acid sequence, 376 residues long: Lipoyl synthase 1, mitochondrial (376 aa).

[4Fe-4S] cluster-binding residues include Cys-109, Cys-114, Cys-120, Cys-140, Cys-144, Cys-147, and Ser-356. Residues 125 to 345 (ETGTATATIM…QTLGMEMGFR (221 aa)) form the Radical SAM core domain.

Belongs to the radical SAM superfamily. Lipoyl synthase family. It depends on [4Fe-4S] cluster as a cofactor.

It is found in the mitochondrion. The enzyme catalyses [[Fe-S] cluster scaffold protein carrying a second [4Fe-4S](2+) cluster] + N(6)-octanoyl-L-lysyl-[protein] + 2 oxidized [2Fe-2S]-[ferredoxin] + 2 S-adenosyl-L-methionine + 4 H(+) = [[Fe-S] cluster scaffold protein] + N(6)-[(R)-dihydrolipoyl]-L-lysyl-[protein] + 4 Fe(3+) + 2 hydrogen sulfide + 2 5'-deoxyadenosine + 2 L-methionine + 2 reduced [2Fe-2S]-[ferredoxin]. It participates in protein modification; protein lipoylation via endogenous pathway; protein N(6)-(lipoyl)lysine from octanoyl-[acyl-carrier-protein]: step 2/2. Functionally, catalyzes the radical-mediated insertion of two sulfur atoms into the C-6 and C-8 positions of the octanoyl moiety bound to the lipoyl domains of lipoate-dependent enzymes, thereby converting the octanoylated domains into lipoylated derivatives. This is Lipoyl synthase 1, mitochondrial from Pisum sativum (Garden pea).